We begin with the raw amino-acid sequence, 512 residues long: Protein male-specific lethal-3 (512 aa).

The region spanning 11–90 (FHKGEIVLCY…QLQRELAEAA (80 aa)) is the Chromo domain. The segment at 98-175 (YSYKGTPDKP…DGRLKGNRGR (78 aa)) is disordered. The segment covering 149-169 (RTRDNSGGKRKEKPPSGDGRL) has biased composition (basic and acidic residues). Residues 196-500 (QEDRIMMRVS…STALPQEDLQ (305 aa)) form the MRG domain.

In terms of assembly, component of the male-specific lethal (MSL) histone acetyltransferase complex, composed of mof, mle, msl-1, msl-2 and msl-3 proteins, as well as roX1 and roX2 non-coding RNAs. Component of a maternal MSL subcomplex composed of mof, msl-1 and msl-3. Ubiquitinated by msl-2.

Its subcellular location is the nucleus. It is found in the chromosome. In terms of biological role, component of the male-specific lethal (MSL) histone acetyltransferase complex, a multiprotein complex essential for elevating transcription of the single X chromosome in the male (X chromosome dosage compensation). The MSL complex specifically associates with the single X chromosome in males and mediates formation of H4K16ac, promoting a two-fold activation of X chromosome. Acts as a histone reader that specifically recognizes and binds histone H3 trimethylated at 'Lys-36' (H3K36me3) and histone H4 monomethylated at 'Lys-20' (H4K20me1). Within the MSL complex, mediates the spreading of the MSL complex from initiation sites on the male X chromosome to flanking chromatin. Following initial recruitment of the MSL complex to male X chromosome by msl-2, msl-3 binds H3K36me3 and promotes spreading of the MSL complex in cis. In addition to its role in dosage compensation in males, promotes germline stem cell differentiation in females: recognizes and binds H3K36me3, promoting recruitment of the ATAC complex and transcription of genes, such as RpS19b. This chain is Protein male-specific lethal-3, found in Drosophila melanogaster (Fruit fly).